A 121-amino-acid polypeptide reads, in one-letter code: Small ribosomal subunit protein uS13 (121 aa).

Residues 88-121 (GMRHRRGLPTRGQNTKNNARTRKGPAKSIAGKKK) form a disordered region. The span at 106 to 121 (ARTRKGPAKSIAGKKK) shows a compositional bias: basic residues.

Belongs to the universal ribosomal protein uS13 family. Part of the 30S ribosomal subunit. Forms a loose heterodimer with protein S19. Forms two bridges to the 50S subunit in the 70S ribosome.

Functionally, located at the top of the head of the 30S subunit, it contacts several helices of the 16S rRNA. In the 70S ribosome it contacts the 23S rRNA (bridge B1a) and protein L5 of the 50S subunit (bridge B1b), connecting the 2 subunits; these bridges are implicated in subunit movement. Contacts the tRNAs in the A and P-sites. This is Small ribosomal subunit protein uS13 from Lactococcus lactis subsp. cremoris (strain MG1363).